A 157-amino-acid chain; its full sequence is 2-C-methyl-D-erythritol 2,4-cyclodiphosphate synthase (157 aa).

Residues Asp8 and His10 each contribute to the a divalent metal cation site. 4-CDP-2-C-methyl-D-erythritol 2-phosphate-binding positions include 8-10 (DVH) and 34-35 (HS). His42 is a binding site for a divalent metal cation. Residues 56–58 (DIG), 132–135 (TTNE), and Arg142 each bind 4-CDP-2-C-methyl-D-erythritol 2-phosphate.

Belongs to the IspF family. In terms of assembly, homotrimer. A divalent metal cation serves as cofactor.

It carries out the reaction 4-CDP-2-C-methyl-D-erythritol 2-phosphate = 2-C-methyl-D-erythritol 2,4-cyclic diphosphate + CMP. Its pathway is isoprenoid biosynthesis; isopentenyl diphosphate biosynthesis via DXP pathway; isopentenyl diphosphate from 1-deoxy-D-xylulose 5-phosphate: step 4/6. Involved in the biosynthesis of isopentenyl diphosphate (IPP) and dimethylallyl diphosphate (DMAPP), two major building blocks of isoprenoid compounds. Catalyzes the conversion of 4-diphosphocytidyl-2-C-methyl-D-erythritol 2-phosphate (CDP-ME2P) to 2-C-methyl-D-erythritol 2,4-cyclodiphosphate (ME-CPP) with a corresponding release of cytidine 5-monophosphate (CMP). The chain is 2-C-methyl-D-erythritol 2,4-cyclodiphosphate synthase from Chlorobaculum parvum (strain DSM 263 / NCIMB 8327) (Chlorobium vibrioforme subsp. thiosulfatophilum).